Here is a 337-residue protein sequence, read N- to C-terminus: GTP 3',8-cyclase (337 aa).

In terms of domain architecture, Radical SAM core spans 17 to 243 (PFQRQYYYLR…HKSHTDGPAK (227 aa)). Arg-26 provides a ligand contact to GTP. [4Fe-4S] cluster-binding residues include Cys-33 and Cys-37. Tyr-39 is a binding site for S-adenosyl-L-methionine. Cys-40 contacts [4Fe-4S] cluster. Arg-76 is a binding site for GTP. Residue Gly-80 coordinates S-adenosyl-L-methionine. Thr-107 contacts GTP. Ser-131 contributes to the S-adenosyl-L-methionine binding site. Lys-168 serves as a coordination point for GTP. Met-202 provides a ligand contact to S-adenosyl-L-methionine. 2 residues coordinate [4Fe-4S] cluster: Cys-265 and Cys-268. Position 270 to 272 (270 to 272 (RLR)) interacts with GTP. Cys-282 contacts [4Fe-4S] cluster.

This sequence belongs to the radical SAM superfamily. MoaA family. Monomer and homodimer. The cofactor is [4Fe-4S] cluster.

The catalysed reaction is GTP + AH2 + S-adenosyl-L-methionine = (8S)-3',8-cyclo-7,8-dihydroguanosine 5'-triphosphate + 5'-deoxyadenosine + L-methionine + A + H(+). It functions in the pathway cofactor biosynthesis; molybdopterin biosynthesis. Functionally, catalyzes the cyclization of GTP to (8S)-3',8-cyclo-7,8-dihydroguanosine 5'-triphosphate. This Haemophilus influenzae (strain 86-028NP) protein is GTP 3',8-cyclase.